Here is a 369-residue protein sequence, read N- to C-terminus: Peptidyl-prolyl cis-trans isomerase D (369 aa).

The region spanning 8-173 is the PPIase cyclophilin-type domain; sequence YFDLSIGGKP…ADVRIDACGI (166 aa). TPR repeat units follow at residues 218–251, 269–302, and 306–339; these read VEAV…LQEY, VAVH…AADD, and AKAL…QPGD.

This sequence belongs to the cyclophilin-type PPIase family. PPIase D subfamily.

The protein resides in the cytoplasm. It catalyses the reaction [protein]-peptidylproline (omega=180) = [protein]-peptidylproline (omega=0). In terms of biological role, PPIases accelerate the folding of proteins. It catalyzes the cis-trans isomerization of proline imidic peptide bonds in oligopeptides. This Eremothecium gossypii (strain ATCC 10895 / CBS 109.51 / FGSC 9923 / NRRL Y-1056) (Yeast) protein is Peptidyl-prolyl cis-trans isomerase D (CPR6).